A 126-amino-acid polypeptide reads, in one-letter code: Protein ApaG (126 aa).

Residues 2-126 (SDPRYQIDVS…FRLAVPGALH (125 aa)) form the ApaG domain.

This is Protein ApaG from Pseudomonas putida (strain ATCC 700007 / DSM 6899 / JCM 31910 / BCRC 17059 / LMG 24140 / F1).